Reading from the N-terminus, the 224-residue chain is Proteasome subunit beta (224 aa).

Positions 1–6 (MDVMKG) are cleaved as a propeptide — removed in mature form; by autocatalysis. Residue T7 is the Nucleophile of the active site.

This sequence belongs to the peptidase T1B family. As to quaternary structure, the 20S proteasome core is composed of 14 alpha and 14 beta subunits that assemble into four stacked heptameric rings, resulting in a barrel-shaped structure. The two inner rings, each composed of seven catalytic beta subunits, are sandwiched by two outer rings, each composed of seven alpha subunits. The catalytic chamber with the active sites is on the inside of the barrel. Has a gated structure, the ends of the cylinder being occluded by the N-termini of the alpha-subunits. Is capped at one or both ends by the proteasome regulatory ATPase, PAN.

The protein resides in the cytoplasm. The catalysed reaction is Cleavage of peptide bonds with very broad specificity.. Its activity is regulated as follows. The formation of the proteasomal ATPase PAN-20S proteasome complex, via the docking of the C-termini of PAN into the intersubunit pockets in the alpha-rings, triggers opening of the gate for substrate entry. Interconversion between the open-gate and close-gate conformations leads to a dynamic regulation of the 20S proteasome proteolysis activity. Component of the proteasome core, a large protease complex with broad specificity involved in protein degradation. This Methanocaldococcus fervens (strain DSM 4213 / JCM 15782 / AG86) (Methanococcus fervens) protein is Proteasome subunit beta.